The primary structure comprises 630 residues: 1-deoxy-D-xylulose-5-phosphate synthase (630 aa).

Thiamine diphosphate contacts are provided by residues His-72 and 113-115; that span reads GHS. A Mg(2+)-binding site is contributed by Asp-144. Residues 145–146, Asn-173, Tyr-284, and Glu-367 each bind thiamine diphosphate; that span reads GA. Asn-173 lines the Mg(2+) pocket.

This sequence belongs to the transketolase family. DXPS subfamily. In terms of assembly, homodimer. It depends on Mg(2+) as a cofactor. Thiamine diphosphate is required as a cofactor.

The enzyme catalyses D-glyceraldehyde 3-phosphate + pyruvate + H(+) = 1-deoxy-D-xylulose 5-phosphate + CO2. It functions in the pathway metabolic intermediate biosynthesis; 1-deoxy-D-xylulose 5-phosphate biosynthesis; 1-deoxy-D-xylulose 5-phosphate from D-glyceraldehyde 3-phosphate and pyruvate: step 1/1. Its function is as follows. Catalyzes the acyloin condensation reaction between C atoms 2 and 3 of pyruvate and glyceraldehyde 3-phosphate to yield 1-deoxy-D-xylulose-5-phosphate (DXP). The polypeptide is 1-deoxy-D-xylulose-5-phosphate synthase (Bacillus cereus (strain G9842)).